A 752-amino-acid chain; its full sequence is Photosystem I P700 chlorophyll a apoprotein A1 (752 aa).

8 helical membrane passes run 73-96, 159-182, 198-222, 294-312, 349-372, 388-414, 436-458, and 533-551; these read IFSAHFGQLAIIFLWVSQAYFHGA, LYWTAMGGLMMSALMVFAGWFHYH, MNHHLAGLLGLGCLSWSGHQIHISL, TAHHHLALAVLFIFAGHMY, WHAQLAINLAMMGSLSIIVAHHMY, LSLFTHHMWIGGFCVCGAAAHGAIFMV, AIISHLNWVCIFLGTHSFGLYIH, and FLVHHIHAFTIHVTVLILL. Residues C575 and C584 each contribute to the [4Fe-4S] cluster site. Helical transmembrane passes span 591–612 and 666–688; these read HIFLGLFWMYNCISVVIFHFSW and LSAYGIIFLGAHFIWAFSLMFLF. Position 677 (H677) interacts with chlorophyll a'. Residues M685 and Y693 each coordinate chlorophyll a. W694 provides a ligand contact to phylloquinone. Residues 726–746 form a helical membrane-spanning segment; the sequence is AVGLAHYLLGGIGTTWSFFLA.

This sequence belongs to the PsaA/PsaB family. In terms of assembly, the PsaA/B heterodimer binds the P700 chlorophyll special pair and subsequent electron acceptors. PSI consists of a core antenna complex that captures photons, and an electron transfer chain that converts photonic excitation into a charge separation. The eukaryotic PSI reaction center is composed of at least 11 subunits. The cofactor is P700 is a chlorophyll a/chlorophyll a' dimer, A0 is one or more chlorophyll a, A1 is one or both phylloquinones and FX is a shared 4Fe-4S iron-sulfur center..

The protein resides in the plastid. The protein localises to the chloroplast thylakoid membrane. It catalyses the reaction reduced [plastocyanin] + hnu + oxidized [2Fe-2S]-[ferredoxin] = oxidized [plastocyanin] + reduced [2Fe-2S]-[ferredoxin]. Its function is as follows. PsaA and PsaB bind P700, the primary electron donor of photosystem I (PSI), as well as the electron acceptors A0, A1 and FX. PSI is a plastocyanin/cytochrome c6-ferredoxin oxidoreductase, converting photonic excitation into a charge separation, which transfers an electron from the donor P700 chlorophyll pair to the spectroscopically characterized acceptors A0, A1, FX, FA and FB in turn. Oxidized P700 is reduced on the lumenal side of the thylakoid membrane by plastocyanin or cytochrome c6. This is Photosystem I P700 chlorophyll a apoprotein A1 from Emiliania huxleyi (Coccolithophore).